Consider the following 173-residue polypeptide: Coordinator of PRMT5 and differentiation stimulator (173 aa).

Position 1 is an N-acetylmethionine (methionine 1). Residues 1-70 (MDPQAATGRG…EGPSSEEEGF (70 aa)) are disordered. Phosphoserine is present on residues serine 64 and serine 65.

Interacts with PRMT5. Interacts with histone H4; specifically interacts with the N-terminus of histone H4 but not with histone H3. Interacts with CBFB. Found in a complex with PRMT5, RUNX1 and CBFB.

It localises to the nucleus. In terms of biological role, histone-binding protein required for histone H4 methyltransferase activity of PRMT5. Specifically required for histone H4 'Arg-3' methylation mediated by PRMT5, but not histone H3 'Arg-8' methylation, suggesting that it modulates the substrate specificity of PRMT5. Specifically interacts with the N-terminus of histone H4 but not with histone H3, suggesting that it acts by promoting the association between histone H4 and PRMT5. Involved in CCNE1 promoter repression. Plays a role in muscle cell differentiation by modulating the recruitment of PRMT5 to the promoter of genes involved in the coordination between cell cycle exit and muscle differentiation. The sequence is that of Coordinator of PRMT5 and differentiation stimulator (Coprs) from Mus musculus (Mouse).